The chain runs to 196 residues: uncharacterized protein (196 aa).

The protein belongs to the CDP-alcohol phosphatidyltransferase class-I family.

This is an uncharacterized protein from Aquifex aeolicus (strain VF5).